A 591-amino-acid polypeptide reads, in one-letter code: MALALTGWQLVWGACVCVLVHGQQAPPGQGSDPGRWRQLIQWENNGQVYSLLNSGAEYVPPGPQGSEANSRVLLAGAPQAPPRRRGGLRRRQAPSLPLPGRVGSDTVRGQARHPFGFGQVPDNWREVAVGDSTGMARARTSVSQQRHGGSASSVSASASAFASTYRQPSSFPQQQFPYPQAPFVSQYETYDPSTRTYDQGYVYYRSASGGLGAAAVASAGVVYPFQPRARYEEYGGGGGEEQPEYPPQGFYPAAPERPYAPQPADGLDRRYSHSLYHEGTAGLEPAYPDPGPDAAQPNGGGGGGTYGGGGGDPRLGWYPPYGNMPPEAYSPPRVVEPQPPFRVLEPPYLPVRSSDAPPPGSERNGAQQGRLSVGSVYRPNQNGRGLPDLVPDPNYVQASTYVQRAHLYSLRCAAEEKCLASTAYAPEATDYDVRVLLRFPQRVKNQGTADFLPNRPRHTWEWHSCHQHYHSMDEFSHYDLLDAATGKKVAEGHKASFCLEDSTCDFGNLKRYACTSHTQGLSPGCYDTYNADIDCQWIDITDVQPGNYILKVHVNPKYIVLESDFTNNVVRCNIHYTGRYVSTTNCKIVQS.

A signal peptide spans 1–22; sequence MALALTGWQLVWGACVCVLVHG. Residues 23–91 constitute a propeptide that is removed on maturation; the sequence is QQAPPGQGSD…PRRRGGLRRR (69 aa). Disordered stretches follow at residues 77-107 and 233-373; these read APQA…SDTV and EYGG…RLSV. The segment covering 82–92 has biased composition (basic residues); it reads PRRRGGLRRRQ. Residues 298–313 are compositionally biased toward gly residues; it reads NGGGGGGTYGGGGGDP. The interaction with FBLN5 stretch occupies residues 319 to 386; it reads PPYGNMPPEA…YRPNQNGRGL (68 aa). The lysyl-oxidase like stretch occupies residues 387–591; that stretch reads PDLVPDPNYV…STTNCKIVQS (205 aa). 5 cysteine pairs are disulfide-bonded: C412–C418, C465–C514, C498–C504, C525–C535, and C572–C586. Residues H466, H468, and H470 each contribute to the Cu cation site. The segment at residues 494 to 529 is a cross-link (lysine tyrosylquinone (Lys-Tyr)); that stretch reads KASFCLEDSTCDFGNLKRYACTSHTQGLSPGCYDTY. Y529 is subject to 2',4',5'-topaquinone.

It belongs to the lysyl oxidase family. In terms of assembly, interacts (via propeptide) with EFEMP2. Interacts with FBLN5. The cofactor is Cu cation. Requires lysine tyrosylquinone residue as cofactor. Post-translationally, the lysine tyrosylquinone cross-link (LTQ) is generated by condensation of the epsilon-amino group of a lysine with a topaquinone produced by oxidation of tyrosine. In terms of processing, proteolytic processing by a furin-like protease causes removal of N-terminal propeptide resulting in an enzyme largely inactive, but further proteolytic processing by BMP1 results in enzyme activation.

The protein localises to the secreted. It is found in the extracellular space. The protein resides in the extracellular matrix. The catalysed reaction is L-lysyl-[protein] + O2 + H2O = (S)-2-amino-6-oxohexanoyl-[protein] + H2O2 + NH4(+). Its function is as follows. Catalyzes the oxidative deamination of lysine and hydroxylysine residues in collagen and elastin, resulting in the formation of covalent cross-linkages, and the stabilization of collagen and elastin fibers. Essential for the elastic fiber homeostasis and for their maintenance at adult age. The sequence is that of Lysyl oxidase homolog 1 (LOXL1) from Bos taurus (Bovine).